Consider the following 338-residue polypeptide: DNA-directed RNA polymerase subunit alpha (338 aa).

The interval 1-234 (MIHKNWQELI…DQLSIFVNFD (234 aa)) is alpha N-terminal domain (alpha-NTD). The segment at 250–338 (FNPLLLKKVD…ELAKKYEDNF (89 aa)) is alpha C-terminal domain (alpha-CTD).

It belongs to the RNA polymerase alpha chain family. In terms of assembly, homodimer. The RNAP catalytic core consists of 2 alpha, 1 beta, 1 beta' and 1 omega subunit. When a sigma factor is associated with the core the holoenzyme is formed, which can initiate transcription.

The catalysed reaction is RNA(n) + a ribonucleoside 5'-triphosphate = RNA(n+1) + diphosphate. DNA-dependent RNA polymerase catalyzes the transcription of DNA into RNA using the four ribonucleoside triphosphates as substrates. This Jannaschia sp. (strain CCS1) protein is DNA-directed RNA polymerase subunit alpha.